Consider the following 84-residue polypeptide: Exodeoxyribonuclease 7 small subunit (84 aa).

This sequence belongs to the XseB family. Heterooligomer composed of large and small subunits.

It localises to the cytoplasm. It catalyses the reaction Exonucleolytic cleavage in either 5'- to 3'- or 3'- to 5'-direction to yield nucleoside 5'-phosphates.. Its function is as follows. Bidirectionally degrades single-stranded DNA into large acid-insoluble oligonucleotides, which are then degraded further into small acid-soluble oligonucleotides. This is Exodeoxyribonuclease 7 small subunit from Yersinia pseudotuberculosis serotype O:3 (strain YPIII).